The following is a 449-amino-acid chain: UDP-N-acetylmuramate--L-alanine ligase (449 aa).

Position 121-127 (121-127) interacts with ATP; sequence GAHGKSS.

It belongs to the MurCDEF family.

It is found in the cytoplasm. The enzyme catalyses UDP-N-acetyl-alpha-D-muramate + L-alanine + ATP = UDP-N-acetyl-alpha-D-muramoyl-L-alanine + ADP + phosphate + H(+). The protein operates within cell wall biogenesis; peptidoglycan biosynthesis. Cell wall formation. The protein is UDP-N-acetylmuramate--L-alanine ligase of Helicobacter pylori (strain J99 / ATCC 700824) (Campylobacter pylori J99).